A 404-amino-acid chain; its full sequence is Exodeoxyribonuclease 7 large subunit (404 aa).

This sequence belongs to the XseA family. Heterooligomer composed of large and small subunits.

The protein resides in the cytoplasm. The enzyme catalyses Exonucleolytic cleavage in either 5'- to 3'- or 3'- to 5'-direction to yield nucleoside 5'-phosphates.. Functionally, bidirectionally degrades single-stranded DNA into large acid-insoluble oligonucleotides, which are then degraded further into small acid-soluble oligonucleotides. The chain is Exodeoxyribonuclease 7 large subunit from Caldanaerobacter subterraneus subsp. tengcongensis (strain DSM 15242 / JCM 11007 / NBRC 100824 / MB4) (Thermoanaerobacter tengcongensis).